The primary structure comprises 338 residues: Uroporphyrinogen decarboxylase (338 aa).

Residues 27–31 (RQAGR), D77, Y151, S203, and H317 contribute to the substrate site.

The protein belongs to the uroporphyrinogen decarboxylase family. As to quaternary structure, homodimer.

It is found in the cytoplasm. It carries out the reaction uroporphyrinogen III + 4 H(+) = coproporphyrinogen III + 4 CO2. Its pathway is porphyrin-containing compound metabolism; protoporphyrin-IX biosynthesis; coproporphyrinogen-III from 5-aminolevulinate: step 4/4. In terms of biological role, catalyzes the decarboxylation of four acetate groups of uroporphyrinogen-III to yield coproporphyrinogen-III. This Wolbachia pipientis wMel protein is Uroporphyrinogen decarboxylase.